A 246-amino-acid polypeptide reads, in one-letter code: Triosephosphate isomerase (246 aa).

9–11 (NWK) contributes to the substrate binding site. The active-site Electrophile is the histidine 95. Glutamate 165 serves as the catalytic Proton acceptor. Residues glycine 171, serine 210, and 231–232 (GG) each bind substrate.

The protein belongs to the triosephosphate isomerase family. Homodimer.

The protein localises to the cytoplasm. The enzyme catalyses D-glyceraldehyde 3-phosphate = dihydroxyacetone phosphate. It participates in carbohydrate biosynthesis; gluconeogenesis. Its pathway is carbohydrate degradation; glycolysis; D-glyceraldehyde 3-phosphate from glycerone phosphate: step 1/1. In terms of biological role, involved in the gluconeogenesis. Catalyzes stereospecifically the conversion of dihydroxyacetone phosphate (DHAP) to D-glyceraldehyde-3-phosphate (G3P). The polypeptide is Triosephosphate isomerase (Thermodesulfovibrio yellowstonii (strain ATCC 51303 / DSM 11347 / YP87)).